Here is a 377-residue protein sequence, read N- to C-terminus: UDP-N-acetylglucosamine--N-acetylmuramyl-(pentapeptide) pyrophosphoryl-undecaprenol N-acetylglucosamine transferase (377 aa).

UDP-N-acetyl-alpha-D-glucosamine-binding positions include 11–13 (TGG), Asn123, Arg164, Ser194, and Gln295.

The protein belongs to the glycosyltransferase 28 family. MurG subfamily.

The protein resides in the cell inner membrane. It carries out the reaction di-trans,octa-cis-undecaprenyl diphospho-N-acetyl-alpha-D-muramoyl-L-alanyl-D-glutamyl-meso-2,6-diaminopimeloyl-D-alanyl-D-alanine + UDP-N-acetyl-alpha-D-glucosamine = di-trans,octa-cis-undecaprenyl diphospho-[N-acetyl-alpha-D-glucosaminyl-(1-&gt;4)]-N-acetyl-alpha-D-muramoyl-L-alanyl-D-glutamyl-meso-2,6-diaminopimeloyl-D-alanyl-D-alanine + UDP + H(+). It functions in the pathway cell wall biogenesis; peptidoglycan biosynthesis. In terms of biological role, cell wall formation. Catalyzes the transfer of a GlcNAc subunit on undecaprenyl-pyrophosphoryl-MurNAc-pentapeptide (lipid intermediate I) to form undecaprenyl-pyrophosphoryl-MurNAc-(pentapeptide)GlcNAc (lipid intermediate II). This chain is UDP-N-acetylglucosamine--N-acetylmuramyl-(pentapeptide) pyrophosphoryl-undecaprenol N-acetylglucosamine transferase, found in Opitutus terrae (strain DSM 11246 / JCM 15787 / PB90-1).